Consider the following 1320-residue polypeptide: Inner centromere protein A (1320 aa).

Disordered regions lie at residues 53 to 75, 426 to 447, 611 to 679, 701 to 877, and 896 to 1215; these read KNSN…NNIS, QEKQ…QPVV, NEPI…VVPP, EEEE…NTAS, and TKSP…DGDE. Low complexity-rich tracts occupy residues 54–75, 429–447, and 615–640; these read NSNY…NNIS, QQQQ…QPVV, and QQPS…SSSS. A coiled-coil region spans residues 221–444; the sequence is QQNQFQEQHK…KQQEKQQQQQ (224 aa). Residues 653–668 are compositionally biased toward polar residues; the sequence is TIVTSKPTNKVQPQSL. A compositionally biased stretch (low complexity) spans 669-679; the sequence is NSNINNNVVPP. The stretch at 683–855 forms a coiled coil; it reads AAIANKLKKQ…QKKKTVQTIL (173 aa). Over residues 701 to 835 the composition is skewed to basic and acidic residues; it reads EEEERLRKKQ…QEKEKQEKQK (135 aa). Residues 851-863 show a composition bias toward polar residues; the sequence is VQTILPTPQTPSR. A compositionally biased stretch (low complexity) spans 864–877; sequence SANNNYDDAANTAS. 2 stretches are compositionally biased toward acidic residues: residues 908–926 and 934–951; these read DDQD…ENSE and QDDS…DSDE. Over residues 965 to 977 the composition is skewed to low complexity; sequence NKNKNSNNSNNNN. Positions 981–1000 are enriched in basic and acidic residues; that stretch reads QSRKDKSIVFDSDSLNRNHN. Composition is skewed to low complexity over residues 1026–1040 and 1047–1061; these read SNMK…YSNS and SPPS…SSES. Positions 1062–1071 are enriched in polar residues; it reads NDCFSPLTPT. Over residues 1072-1096 the composition is skewed to low complexity; the sequence is NNNKINNNKINNNNSNNNSFNNSNS. A compositionally biased stretch (polar residues) spans 1120–1136; it reads SKTSPFLTIRNTPSPLK. Residues 1143–1154 are compositionally biased toward low complexity; sequence NMSSASSLSSFD. Acidic residues predominate over residues 1155–1170; that stretch reads SDNDSDYNDNDIDDGE. Residues 1175-1187 are compositionally biased toward polar residues; that stretch reads PNENFTTPLKNQE. A compositionally biased stretch (low complexity) spans 1188–1198; the sequence is NNNNNNSNNSN. The span at 1199 to 1209 shows a compositional bias: polar residues; sequence TQYPIITSPPS.

The protein belongs to the INCENP family. As to quaternary structure, interacts with aurK.

The protein resides in the chromosome. It localises to the centromere. It is found in the cytoplasm. Its subcellular location is the cytoskeleton. The protein localises to the spindle. The protein resides in the nucleus. It localises to the cleavage furrow. In terms of biological role, chromosomal passenger protein that seems to be required for chromosome segregation and the onset of cytokinesis during mitosis. Plays a key role in the abscission of daughter cells at the end of cytokinesis and in the establishment or maintenance of a bipolar spindle. The chain is Inner centromere protein A (icpA) from Dictyostelium discoideum (Social amoeba).